The chain runs to 578 residues: PX domain-containing protein kinase-like protein (578 aa).

Residues 14–126 (LDDTVPLTAA…KFLDPNNYSA (113 aa)) form the PX domain. A Protein kinase domain is found at 88 to 481 (FIAERQKGLQ…LENSEEHSAK (394 aa)). Basic residues-rich tracts occupy residues 437–448 (IHQHRRLTRAQS) and 457–469 (KKRK…KSKR). 2 disordered regions span residues 437-548 (IHQH…NGMS) and 559-578 (FQKG…PKIG). The span at 483–513 (SNSNNSAGSGASSPLTSPSSPTPPSTSGISA) shows a compositional bias: low complexity. Positions 514–530 (LPPPPPPPPPPAAPLPP) are enriched in pro residues. A WH2 domain is found at 548 to 567 (SRGALLSSIQNFQKGTLRKA). Residues 568-578 (KTCDHSAPKIG) are compositionally biased toward basic and acidic residues.

It belongs to the protein kinase superfamily. In terms of tissue distribution, widely expressed in all tissues examined except in heart. Isoform 1 is expressed in high levels in the brain, skeletal muscle, spleen and testis. Isoform 7 expression has yet to be demonstrated.

It localises to the cytoplasm. Its subcellular location is the cell membrane. Binds to and modulates brain Na,K-ATPase subunits ATP1B1 and ATP1B3 and may thereby participate in the regulation of electrical excitability and synaptic transmission. May not display kinase activity. The chain is PX domain-containing protein kinase-like protein from Homo sapiens (Human).